A 509-amino-acid polypeptide reads, in one-letter code: MEDFKVKLVELVSITGGLIVLFIAYTGFRTVYNASFNRLRHIPGPWINSVSMIPYARHMLAGTTVENSVRLHEKYGDVVRISPNEVSFISGETAFPDIYGFRTGKLKGHLNMEKDPVWYVKPSNGSPSLLQANDEDHARGRRVLSHAFSERAVAAQEPLVQTYVDQLINGLKGATAEKEGEGVVDMVSWYNWTTFDIIADLMFGEPFGCLQDLSTHKYVAVLLESFKSLRILYVLAHFPWLKYFGNLFLDQRQVQKRKDHLSWVSTQVQKRRDRETTRPDFMTLILANNGNKGSKLTDEEINSNAFLLLNAGSETTATLLSAVTFLLLKNPRVMEKLKQEIREKFASYEEIQLPTLNTMTYLHAVLLEALRYFPPAPVGFGRVVNRGGEFISGHFLPEGCIVSVSQYAAYHSSRNFKDPDAFVPERWHVPREKEYADDKRSAAQPFSYGPRGCLGRNLAHAELRIILAKMVWSFDLELEERSQDWLSRCKVMRLWVKPELAVKLKKVIR.

Residues 8 to 28 (LVELVSITGGLIVLFIAYTGF) traverse the membrane as a helical segment. A heme-binding site is contributed by Cys453.

This sequence belongs to the cytochrome P450 family. Requires heme as cofactor.

It localises to the membrane. It functions in the pathway secondary metabolite biosynthesis. Functionally, cytochrome P450 monooxygenase; part of the tra gene cluster that produces terrestric acid. The clavatol biosynthesis cluster cla and the terrestric acid cluster tra are both involved in the production of peniphenones and penilactones. The non-reducing PKS claF is responsible for the formation of clavatol from successive condensations of 3 malonyl-CoA units, presumably with a simple acetyl-CoA starter unit, and 2 methylation steps. The esterase claE probably collaborates with claF by catalyzing the hydrolysis of ACP-bound acyl intermediates to free the ACP from stalled intermediates. The clavatol oxidase claD then converts clavatol to hydroxyclavatol. Spontaneous dehydration of hydroxyclavatol leads to the accumulation of the highly active ortho-quinone methide. On the other hand, the PKS-NRPS hybrid traA is involved in the formation of crustosic acid, with the help of traB and traD. The polyketide synthase module (PKS) of traA is responsible for the synthesis of the polyketide backbone via the condensation of an acetyl-CoA starter unit with 3 malonyl-CoA units. The downstream nonribosomal peptide synthetase (NRPS) module then amidates the carboxyl end of the polyketide with L-malic acid. Because traA lacks a designated enoylreductase (ER) domain, the required activity is provided the enoyl reductase traG. Crustosic acid undergoes decarboxylation and isomerization to the terrestric acid, catalyzed by the 2-oxoglutarate-dependent dioxygenase traH. Both acids are further converted to the 2 gamma-butyrolactones (R)-5-methyltetronic acid and (S)-5-carboxylmethyltetronic acid, with involvement of the cytochrome P450 monooxygenase claJ. Spontaneous addition of the methide to these gamma-butyrolactones leads to peniphenone D and penilactone D, which undergo again stereospecific attacking by methide to give penilactones A and B. The protein is Cytochrome P450 monooxygenase traB of Penicillium crustosum (Blue mold fungus).